Consider the following 293-residue polypeptide: MFTGSYVALITPMYQSGEIDYPSLKKLVDFHIANGSHGLIAVGTTGESATLPFDEHIEVVKRMVEFADKKIPVIAGSGANSTAEAIFLSEQMAGTGIDGFLSVVPYYNKPQQKGMVAHFNAVADATDLPVLLYNVPGRTVADMLPDTVAELATHPKIVGLKDATGDIARLKQMQPLVDKDFVFLSGDDATGCEFLTAGGHGVISVTANVVPKQMSQMCEAALAGNYSKAKEIDQQIAELHSALFIEPNPVLPKWALYKMGLIQSAFLRLPLIESELDSQNHIEQVMRNSGVLS.

Residue threonine 45 coordinates pyruvate. The active-site Proton donor/acceptor is the tyrosine 133. The active-site Schiff-base intermediate with substrate is the lysine 161. Isoleucine 203 provides a ligand contact to pyruvate.

This sequence belongs to the DapA family. As to quaternary structure, homotetramer; dimer of dimers.

It localises to the cytoplasm. The catalysed reaction is L-aspartate 4-semialdehyde + pyruvate = (2S,4S)-4-hydroxy-2,3,4,5-tetrahydrodipicolinate + H2O + H(+). It functions in the pathway amino-acid biosynthesis; L-lysine biosynthesis via DAP pathway; (S)-tetrahydrodipicolinate from L-aspartate: step 3/4. Functionally, catalyzes the condensation of (S)-aspartate-beta-semialdehyde [(S)-ASA] and pyruvate to 4-hydroxy-tetrahydrodipicolinate (HTPA). In Pseudoalteromonas atlantica (strain T6c / ATCC BAA-1087), this protein is 4-hydroxy-tetrahydrodipicolinate synthase.